Consider the following 180-residue polypeptide: Shikimate kinase (180 aa).

15–20 (GAGKTT) contacts ATP. Threonine 19 serves as a coordination point for Mg(2+). Substrate-binding residues include aspartate 37, arginine 61, and glycine 83. Position 121 (arginine 121) interacts with ATP. Substrate is bound at residue arginine 140.

The protein belongs to the shikimate kinase family. In terms of assembly, monomer. It depends on Mg(2+) as a cofactor.

Its subcellular location is the cytoplasm. The enzyme catalyses shikimate + ATP = 3-phosphoshikimate + ADP + H(+). The protein operates within metabolic intermediate biosynthesis; chorismate biosynthesis; chorismate from D-erythrose 4-phosphate and phosphoenolpyruvate: step 5/7. Catalyzes the specific phosphorylation of the 3-hydroxyl group of shikimic acid using ATP as a cosubstrate. The sequence is that of Shikimate kinase from Psychrobacter sp. (strain PRwf-1).